The primary structure comprises 515 residues: ATP synthase subunit alpha (515 aa).

171–178 (GDRQTGKT) lines the ATP pocket.

This sequence belongs to the ATPase alpha/beta chains family. F-type ATPases have 2 components, CF(1) - the catalytic core - and CF(0) - the membrane proton channel. CF(1) has five subunits: alpha(3), beta(3), gamma(1), delta(1), epsilon(1). CF(0) has three main subunits: a(1), b(2) and c(9-12). The alpha and beta chains form an alternating ring which encloses part of the gamma chain. CF(1) is attached to CF(0) by a central stalk formed by the gamma and epsilon chains, while a peripheral stalk is formed by the delta and b chains.

It localises to the cell inner membrane. It carries out the reaction ATP + H2O + 4 H(+)(in) = ADP + phosphate + 5 H(+)(out). Produces ATP from ADP in the presence of a proton gradient across the membrane. The alpha chain is a regulatory subunit. The protein is ATP synthase subunit alpha of Xanthomonas oryzae pv. oryzae (strain MAFF 311018).